We begin with the raw amino-acid sequence, 424 residues long: Tyrosine--tRNA ligase 1 (424 aa).

Tyr-37 serves as a coordination point for L-tyrosine. A 'HIGH' region motif is present at residues Pro-42–His-51. Residues Tyr-175 and Gln-179 each contribute to the L-tyrosine site. A 'KMSKS' region motif is present at residues Lys-235–Thr-239. An ATP-binding site is contributed by Lys-238. The region spanning Ala-357 to Gly-414 is the S4 RNA-binding domain.

Belongs to the class-I aminoacyl-tRNA synthetase family. TyrS type 1 subfamily. Homodimer.

The protein localises to the cytoplasm. The catalysed reaction is tRNA(Tyr) + L-tyrosine + ATP = L-tyrosyl-tRNA(Tyr) + AMP + diphosphate + H(+). Functionally, catalyzes the attachment of tyrosine to tRNA(Tyr) in a two-step reaction: tyrosine is first activated by ATP to form Tyr-AMP and then transferred to the acceptor end of tRNA(Tyr). In Photorhabdus laumondii subsp. laumondii (strain DSM 15139 / CIP 105565 / TT01) (Photorhabdus luminescens subsp. laumondii), this protein is Tyrosine--tRNA ligase 1.